The primary structure comprises 181 residues: Ferredoxin C 2, chloroplastic (181 aa).

A chloroplast-targeting transit peptide spans 1 to 44 (MALILPCTFCTSLQKKNFPINRRYITNFRRGATTATCEFRIPVE). In terms of domain architecture, 2Fe-2S ferredoxin-type spans 59–151 (HKVTVHDRQR…DLEVETQDED (93 aa)). The [2Fe-2S] cluster site is built by Cys-97, Cys-102, Cys-105, and Cys-135.

The protein belongs to the 2Fe2S plant-type ferredoxin family. [2Fe-2S] cluster is required as a cofactor.

The protein localises to the plastid. It is found in the chloroplast. Ferredoxins are iron-sulfur proteins that transfer electrons in a wide variety of metabolic reactions. Mediates alternative electron partitioning in conditions of acceptor limitation at photosystem I. The chain is Ferredoxin C 2, chloroplastic from Arabidopsis thaliana (Mouse-ear cress).